The chain runs to 325 residues: Coiled-coil domain-containing protein 130 homolog (325 aa).

Residues 156–262 are a coiled coil; that stretch reads LKLENKKLDI…KLKRELIKNE (107 aa).

It belongs to the CWC16 family.

This Dictyostelium discoideum (Social amoeba) protein is Coiled-coil domain-containing protein 130 homolog.